We begin with the raw amino-acid sequence, 113 residues long: Cell cycle protein GpsB (113 aa).

Residues 32-70 (LDSVIKDYENFGKEIERMKNENDRLTDKVDELNKQVSAG) adopt a coiled-coil conformation.

It belongs to the GpsB family. In terms of assembly, forms polymers through the coiled coil domains. Interacts with PBP1, MreC and EzrA.

The protein localises to the cytoplasm. In terms of biological role, divisome component that associates with the complex late in its assembly, after the Z-ring is formed, and is dependent on DivIC and PBP2B for its recruitment to the divisome. Together with EzrA, is a key component of the system that regulates PBP1 localization during cell cycle progression. Its main role could be the removal of PBP1 from the cell pole after pole maturation is completed. Also contributes to the recruitment of PBP1 to the division complex. Not essential for septum formation. This Pediococcus pentosaceus (strain ATCC 25745 / CCUG 21536 / LMG 10740 / 183-1w) protein is Cell cycle protein GpsB.